A 281-amino-acid chain; its full sequence is Insecticidal crystal toxin protein (281 aa).

Antigenic epitope regions lie at residues 54 to 78, 91 to 104, 108 to 116, 131 to 148, 160 to 172, 189 to 196, 208 to 216, 221 to 236, and 247 to 256; these read NYSH…VYTF, IYTH…AVKA, GTASKVVQG, FKIT…FIRI, AVIN…VAEL, KYKDFQYL, QNISLVFNR, TNTT…LPIT, and KLETVQQIIN.

It belongs to the delta endotoxin family.

In terms of biological role, promotes colloidosmotic lysis by binding to the midgut epithelial cells of insects. Active against Mamestra brassicae. This chain is Insecticidal crystal toxin protein, found in Bacillus thuringiensis subsp. kurstaki.